The chain runs to 135 residues: Antennal-specific protein OS-C (135 aa).

An N-terminal signal peptide occupies residues 1–27 (MGFHMGRQLLLSGFLLVMLQMVTQTQA). The tract at residues 43–84 (VIKREGDDDGDDDDSSSEETVEDSEESRRRRREVNTDNTPSA) is disordered. Over residues 49 to 67 (DDDGDDDDSSSEETVEDSE) the composition is skewed to acidic residues.

As to expression, antenna. In the third antennal segment. Expressed in sencilla coeloconica.

The chain is Antennal-specific protein OS-C (Os-C) from Drosophila melanogaster (Fruit fly).